Consider the following 603-residue polypeptide: UvrABC system protein C (603 aa).

The region spanning 15 to 92 is the GIY-YIG domain; it reads DQPGCYLMKN…IQKHQPYYNI (78 aa). The region spanning 197-232 is the UVR domain; the sequence is AQVKKQLTARMERAAGQLEFERAAEIRDQLHYIEVT.

The protein belongs to the UvrC family. Interacts with UvrB in an incision complex.

The protein localises to the cytoplasm. Functionally, the UvrABC repair system catalyzes the recognition and processing of DNA lesions. UvrC both incises the 5' and 3' sides of the lesion. The N-terminal half is responsible for the 3' incision and the C-terminal half is responsible for the 5' incision. The polypeptide is UvrABC system protein C (Limosilactobacillus fermentum (strain NBRC 3956 / LMG 18251) (Lactobacillus fermentum)).